The sequence spans 577 residues: Arginine--tRNA ligase (577 aa).

The short motif at 132–142 (ANPTGPLHVGH) is the 'HIGH' region element.

It belongs to the class-I aminoacyl-tRNA synthetase family. Monomer.

It is found in the cytoplasm. The enzyme catalyses tRNA(Arg) + L-arginine + ATP = L-arginyl-tRNA(Arg) + AMP + diphosphate. This chain is Arginine--tRNA ligase, found in Herminiimonas arsenicoxydans.